The primary structure comprises 636 residues: Eisosome protein sle1 (636 aa).

The tract at residues methionine 1–glycine 297 is required for targeting the protein to eisosomes. Disordered stretches follow at residues alanine 111–asparagine 205, tyrosine 222–valine 284, aspartate 313–phenylalanine 387, glutamine 400–leucine 451, aspartate 467–alanine 550, and proline 572–asparagine 604. 5 stretches are compositionally biased toward polar residues: residues proline 131–glutamine 159, arginine 166–serine 178, arginine 188–alanine 204, serine 237–serine 255, and serine 315–arginine 354. Positions serine 355–serine 383 are enriched in low complexity. 2 stretches are compositionally biased toward polar residues: residues glutamine 400–glutamine 412 and proline 422–glutamine 439. Residues threonine 471–alanine 484 show a composition bias toward low complexity. A compositionally biased stretch (basic and acidic residues) spans serine 503–arginine 512. Over residues proline 572–glutamine 589 the composition is skewed to polar residues.

Component of eisosomes, large cytoplasmic protein assemblies that localize to specialized domains termed MCCs on the plasma membrane.

It is found in the cytoplasm. Its subcellular location is the cell cortex. The protein localises to the cell tip. Important for the biogenesis of filamentous eisosomes, large cytoplasmic protein assemblies that localize to specialized domains on the plasma membrane to cluster specific proteins at sites of membrane invaginations. The sequence is that of Eisosome protein sle1 (sle1) from Schizosaccharomyces pombe (strain 972 / ATCC 24843) (Fission yeast).